Reading from the N-terminus, the 62-residue chain is MNWGSISSGTPGLFVESIRNTPSVVKINVIFLKVISNTAVSVFWRDRRIRFESDWLNSYFQK.

The protein belongs to the asfivirus C62L family.

This is an uncharacterized protein from African swine fever virus (strain Badajoz 1971 Vero-adapted) (Ba71V).